We begin with the raw amino-acid sequence, 304 residues long: ATP phosphoribosyltransferase (304 aa).

Belongs to the ATP phosphoribosyltransferase family.

Its subcellular location is the cytoplasm. The catalysed reaction is 1-(5-phospho-beta-D-ribosyl)-ATP + diphosphate = 5-phospho-alpha-D-ribose 1-diphosphate + ATP. The protein operates within amino-acid biosynthesis; L-histidine biosynthesis; L-histidine from 5-phospho-alpha-D-ribose 1-diphosphate: step 1/9. Functionally, catalyzes the condensation of ATP and 5-phosphoribose 1-diphosphate to form N'-(5'-phosphoribosyl)-ATP (PR-ATP). Has a crucial role in the pathway because the rate of histidine biosynthesis seems to be controlled primarily by regulation of the enzymatic activity. In Debaryomyces hansenii (strain ATCC 36239 / CBS 767 / BCRC 21394 / JCM 1990 / NBRC 0083 / IGC 2968) (Yeast), this protein is ATP phosphoribosyltransferase (HIS1).